A 312-amino-acid polypeptide reads, in one-letter code: Ribonuclease Z (312 aa).

Zn(2+) contacts are provided by histidine 63, histidine 65, aspartate 67, histidine 68, histidine 140, aspartate 211, and histidine 269. Aspartate 67 functions as the Proton acceptor in the catalytic mechanism.

It belongs to the RNase Z family. Homodimer. The cofactor is Zn(2+).

It catalyses the reaction Endonucleolytic cleavage of RNA, removing extra 3' nucleotides from tRNA precursor, generating 3' termini of tRNAs. A 3'-hydroxy group is left at the tRNA terminus and a 5'-phosphoryl group is left at the trailer molecule.. In terms of biological role, zinc phosphodiesterase, which displays some tRNA 3'-processing endonuclease activity. Probably involved in tRNA maturation, by removing a 3'-trailer from precursor tRNA. The chain is Ribonuclease Z from Anoxybacillus flavithermus (strain DSM 21510 / WK1).